A 168-amino-acid polypeptide reads, in one-letter code: Venom nerve growth factor (168 aa).

A signal peptide spans 1–18; the sequence is MSMLCYTLIIAFLIGIWA. The propeptide occupies 19-123; the sequence is APKSEDNVSL…ADSLNRNIRA (105 aa). N25 carries N-linked (GlcNAc...) asparagine glycosylation. The interval 48–70 is disordered; the sequence is LKTSQNTDQHSPAPKKAEDQEFG. A glycan (N-linked (GlcNAc...) asparagine) is linked at N148.

The protein belongs to the NGF-beta family. As to quaternary structure, homodimer; non-covalently linked. As to expression, expressed by the venom gland.

Its subcellular location is the secreted. Its function is as follows. Nerve growth factor is important for the development and maintenance of the sympathetic and sensory nervous systems. It stimulates division and differentiation of sympathetic and embryonic sensory neurons as well as basal forebrain cholinergic neurons in the brain. Its relevance in the snake venom is not clear. However, it has been shown to inhibit metalloproteinase-dependent proteolysis of platelet glycoprotein Ib alpha, suggesting a metalloproteinase inhibition to prevent metalloprotease autodigestion and/or protection against prey proteases. This Echis ocellatus (Ocellated saw-scaled viper) protein is Venom nerve growth factor.